The primary structure comprises 474 residues: tRNA-2-methylthio-N(6)-dimethylallyladenosine synthase (474 aa).

An MTTase N-terminal domain is found at 3–120 (KKLHIKTWGC…LPDMIDQVRR (118 aa)). Positions 12, 49, 83, 157, 161, and 164 each coordinate [4Fe-4S] cluster. Residues 143 to 375 (RAEGPTAFVS…QDRITQQAMR (233 aa)) enclose the Radical SAM core domain. The region spanning 378 to 441 (RHMMGTVQRI…TNSLRGKFIR (64 aa)) is the TRAM domain.

It belongs to the methylthiotransferase family. MiaB subfamily. Monomer. Requires [4Fe-4S] cluster as cofactor.

Its subcellular location is the cytoplasm. The catalysed reaction is N(6)-dimethylallyladenosine(37) in tRNA + (sulfur carrier)-SH + AH2 + 2 S-adenosyl-L-methionine = 2-methylsulfanyl-N(6)-dimethylallyladenosine(37) in tRNA + (sulfur carrier)-H + 5'-deoxyadenosine + L-methionine + A + S-adenosyl-L-homocysteine + 2 H(+). Catalyzes the methylthiolation of N6-(dimethylallyl)adenosine (i(6)A), leading to the formation of 2-methylthio-N6-(dimethylallyl)adenosine (ms(2)i(6)A) at position 37 in tRNAs that read codons beginning with uridine. In Shewanella sp. (strain ANA-3), this protein is tRNA-2-methylthio-N(6)-dimethylallyladenosine synthase.